The chain runs to 136 residues: Histone H3-like 3 (136 aa).

A compositionally biased stretch (basic residues) spans 1–15; it reads MARTKQTARKSHGGK. The disordered stretch occupies residues 1–42; that stretch reads MARTKQTARKSHGGKAPRTLLATKAARKSAPTTGGVKKPHRY. Lys5 and Lys10 each carry N6,N6,N6-trimethyllysine; alternate. An N6,N6-dimethyllysine; alternate mark is found at Lys5 and Lys10. An N6-methyllysine; alternate mark is found at Lys5 and Lys10. The residue at position 10 (Lys10) is an N6-acetyllysine; alternate. Ser11 carries the post-translational modification Phosphoserine. Residue Lys15 is modified to N6-acetyllysine. Lys24 and Lys28 each carry N6-methyllysine; alternate. Lys24 is subject to N6-acetyllysine; alternate. The residue at position 28 (Lys28) is an N6,N6,N6-trimethyllysine; alternate. Position 28 is an N6,N6-dimethyllysine; alternate (Lys28). The residue at position 29 (Ser29) is a Phosphoserine. N6,N6,N6-trimethyllysine; alternate is present on Lys37. Lys37 bears the N6,N6-dimethyllysine; alternate mark. Lys37 carries the N6-methyllysine; alternate modification.

The protein belongs to the histone H3 family. In terms of assembly, the nucleosome is a histone octamer containing two molecules each of H2A, H2B, H3 and H4 assembled in one H3-H4 heterotetramer and two H2A-H2B heterodimers. The octamer wraps approximately 147 bp of DNA. As to expression, expressed in roots, seedlings, leaves and open flowers.

The protein localises to the nucleus. Its subcellular location is the chromosome. Its function is as follows. Core component of nucleosome. Nucleosomes wrap and compact DNA into chromatin, limiting DNA accessibility to the cellular machineries which require DNA as a template. Histones thereby play a central role in transcription regulation, DNA repair, DNA replication and chromosomal stability. DNA accessibility is regulated via a complex set of post-translational modifications of histones, also called histone code, and nucleosome remodeling. The chain is Histone H3-like 3 from Arabidopsis thaliana (Mouse-ear cress).